Consider the following 290-residue polypeptide: Nucleoid occlusion protein (290 aa).

Positions 153-172 (EALAQRLGKGQSTVANKLRL) form a DNA-binding region, H-T-H motif.

The protein belongs to the ParB family.

The protein localises to the cytoplasm. It is found in the nucleoid. Its function is as follows. Effects nucleoid occlusion by binding relatively nonspecifically to DNA and preventing the assembly of the division machinery in the vicinity of the nucleoid, especially under conditions that disturb the cell cycle. It helps to coordinate cell division and chromosome segregation by preventing the formation of the Z ring through the nucleoid, which would cause chromosome breakage. This chain is Nucleoid occlusion protein, found in Bacillus mycoides (strain KBAB4) (Bacillus weihenstephanensis).